Here is a 577-residue protein sequence, read N- to C-terminus: MNIQSLINDKVSQALEAAGAPAGSPAAVRQSAKAQFGDYQANGVMGVAKRLGTNPREFAQKVLDVLDLDGIASKTEIAGPGFINIFLSEEFLAKQAEAALADKRLGVAKEEQQNIVADYSAPNVAKEMHVGHLRSTIIGDAVVRTLEFLGHNVTRANHIGDWGTQFGMLIANLERIQKEKGEVSMELSDLEGFYRESKKLYDEDEEFAVTARGYVVKLQSGDEFCAEMWKKLVDVTMVQNQRNYDRLNVSLTRDNVMGESMYNSMLAPIVADLQKQGLAVESEGAQVVFLDEYKNKDGEPMGVIVQKRDGGFLYTTTDIACAKYRYEELNADRVLYFIDSRQHQHLMQAWTIVRKAGYVPESVSLEHHAFGMMLGKDGRPFKTRAGGTVRLADLLDEAEERAAKLIEEKNKDLPAEEKAKIATTVAMAAVKYSDLSKHRTTDYIFDWDNMLAFEGNTAPYMQYAYTRVASIFSKAGLSMDELTGEVKITDEKEKALVAKLMQFEEAVQAVASEGQPHLMCAYLFELAGQFSSFYEACPILNNEDDAVKQSRLKLAALTAKTIKQGLELLGIETLERM.

The 'HIGH' region signature appears at 122-132 (PNVAKEMHVGH).

The protein belongs to the class-I aminoacyl-tRNA synthetase family. In terms of assembly, monomer.

The protein resides in the cytoplasm. The enzyme catalyses tRNA(Arg) + L-arginine + ATP = L-arginyl-tRNA(Arg) + AMP + diphosphate. The protein is Arginine--tRNA ligase of Aliivibrio fischeri (strain MJ11) (Vibrio fischeri).